We begin with the raw amino-acid sequence, 684 residues long: Threonine--tRNA ligase (684 aa).

Residues 1–60 (MSISITLHRSGTSRTQQVDTTTTGLDLFGSDRAVVAMRVDGNLVDLQRELHDGAEVEPVE) form the TGS domain. The catalytic stretch occupies residues 256–567 (DHRKLGAELD…LTEHYAGAFP (312 aa)). The Zn(2+) site is built by cysteine 361, histidine 412, and histidine 544.

It belongs to the class-II aminoacyl-tRNA synthetase family. In terms of assembly, homodimer. Zn(2+) is required as a cofactor.

Its subcellular location is the cytoplasm. It catalyses the reaction tRNA(Thr) + L-threonine + ATP = L-threonyl-tRNA(Thr) + AMP + diphosphate + H(+). Functionally, catalyzes the attachment of threonine to tRNA(Thr) in a two-step reaction: L-threonine is first activated by ATP to form Thr-AMP and then transferred to the acceptor end of tRNA(Thr). Also edits incorrectly charged L-seryl-tRNA(Thr). The polypeptide is Threonine--tRNA ligase (Cutibacterium acnes (strain DSM 16379 / KPA171202) (Propionibacterium acnes)).